The primary structure comprises 257 residues: Small ribosomal subunit protein uS2 (257 aa).

This sequence belongs to the universal ribosomal protein uS2 family.

The protein is Small ribosomal subunit protein uS2 of Bartonella henselae (strain ATCC 49882 / DSM 28221 / CCUG 30454 / Houston 1) (Rochalimaea henselae).